We begin with the raw amino-acid sequence, 147 residues long: Large ribosomal subunit protein uL15 (147 aa).

The segment at 1-65 (MQLHELKPAP…PLQRRLPKRG (65 aa)) is disordered. Gly residues-rich tracts occupy residues 21–31 (QGIGSGLGKTA) and 42–52 (SGGGVRPGFEG).

Belongs to the universal ribosomal protein uL15 family. Part of the 50S ribosomal subunit.

Binds to the 23S rRNA. The polypeptide is Large ribosomal subunit protein uL15 (Heliobacterium modesticaldum (strain ATCC 51547 / Ice1)).